The sequence spans 263 residues: uncharacterized protein (263 aa).

The protein to B.subtilis soj.

This is an uncharacterized protein from Pseudomonas putida (strain ATCC 47054 / DSM 6125 / CFBP 8728 / NCIMB 11950 / KT2440).